The chain runs to 510 residues: Lysine--tRNA ligase (510 aa).

Positions 420 and 427 each coordinate Mg(2+).

The protein belongs to the class-II aminoacyl-tRNA synthetase family. As to quaternary structure, homodimer. Mg(2+) serves as cofactor.

It localises to the cytoplasm. It catalyses the reaction tRNA(Lys) + L-lysine + ATP = L-lysyl-tRNA(Lys) + AMP + diphosphate. The polypeptide is Lysine--tRNA ligase (Vibrio campbellii (strain ATCC BAA-1116)).